We begin with the raw amino-acid sequence, 224 residues long: MGRPDQTPSPRMNNNFNPVFHAQSEQPVDEKRVLQAEQIYPNNGGVVNQPNQVPMRPGPPTYINQSATFNQPYGVSMAGPVHTQPSNWTSGLFDCMNDGENALITCCFPFVTFGQIAEVIDEGATSCGTAGMLYGLICCLFAIPCVYTCTFRTKLRSKYGLPDAPAPDWITHCFCEYCALCQEYRELKNRGLDPSIGWIGNVQKQRMGQQQEMMAPPMGQRMMG.

The chain crosses the membrane as a helical span at residues 131–151 (GMLYGLICCLFAIPCVYTCTF).

It belongs to the cornifelin family.

It localises to the membrane. In terms of biological role, may be involved in heavy metals transport. In Arabidopsis thaliana (Mouse-ear cress), this protein is Protein PLANT CADMIUM RESISTANCE 6 (PCR6).